Consider the following 445-residue polypeptide: Phosphoglucosamine mutase (445 aa).

Ser-102 (phosphoserine intermediate) is an active-site residue. Mg(2+) is bound by residues Ser-102, Asp-240, Asp-242, and Asp-244. Ser-102 carries the phosphoserine modification.

It belongs to the phosphohexose mutase family. Requires Mg(2+) as cofactor. In terms of processing, activated by phosphorylation.

The catalysed reaction is alpha-D-glucosamine 1-phosphate = D-glucosamine 6-phosphate. In terms of biological role, catalyzes the conversion of glucosamine-6-phosphate to glucosamine-1-phosphate. The chain is Phosphoglucosamine mutase from Mycolicibacterium vanbaalenii (strain DSM 7251 / JCM 13017 / BCRC 16820 / KCTC 9966 / NRRL B-24157 / PYR-1) (Mycobacterium vanbaalenii).